An 823-amino-acid polypeptide reads, in one-letter code: Valine--tRNA ligase (823 aa).

Residue lysine 547 coordinates ATP.

The protein belongs to the class-I aminoacyl-tRNA synthetase family. ValS type 2 subfamily.

The protein localises to the cytoplasm. It carries out the reaction tRNA(Val) + L-valine + ATP = L-valyl-tRNA(Val) + AMP + diphosphate. Functionally, catalyzes the attachment of valine to tRNA(Val). As ValRS can inadvertently accommodate and process structurally similar amino acids such as threonine, to avoid such errors, it has a 'posttransfer' editing activity that hydrolyzes mischarged Thr-tRNA(Val) in a tRNA-dependent manner. This is Valine--tRNA ligase (valS) from Aeropyrum pernix (strain ATCC 700893 / DSM 11879 / JCM 9820 / NBRC 100138 / K1).